The chain runs to 1500 residues: Carbamoyl-phosphate synthase [ammonia], mitochondrial (1500 aa).

The N-terminal 38 residues, 1–38 (MTRILTAFKVVRTLKTGFGFTNVTAHQKWKFSRPGIRL), are a transit peptide targeting the mitochondrion. The segment at 39 to 218 (LSVKAQTAHI…VKVYGKGNPT (180 aa)) is anthranilate phosphoribosyltransferase homolog. An N6-acetyllysine; alternate mark is found at K55, K57, and K119. Position 55 is an N6-glutaryllysine; alternate (K55). K55, K57, and K119 each carry N6-succinyllysine; alternate. S148 bears the Phosphoserine mark. K157 and K171 each carry N6-acetyllysine; alternate. The residue at position 157 (K157) is an N6-succinyllysine; alternate. K171 carries the post-translational modification N6-glutaryllysine; alternate. The residue at position 176 (K176) is an N6-glutaryllysine. Residues K182 and K197 each carry the N6-acetyllysine modification. N6-acetyllysine; alternate is present on residues K207, K210, K214, K219, and K228. 5 positions are modified to N6-glutaryllysine; alternate: K207, K210, K214, K219, and K228. Position 207 is an N6-succinyllysine; alternate (K207). K214 carries the post-translational modification N6-succinyllysine; alternate. Positions 219–404 (KVVAVDCGIK…FSLIKKGKAT (186 aa)) constitute a Glutamine amidotransferase type-1 domain. Residue K237 is modified to N6-glutaryllysine. N6-acetyllysine; alternate is present on residues K280, K287, K307, and K310. K280 is subject to N6-glutaryllysine; alternate. N6-succinyllysine; alternate is present on residues K287 and K307. N6-glutaryllysine; alternate is present on residues K307 and K310. N6-succinyllysine is present on K400. 4 positions are modified to N6-glutaryllysine; alternate: K402, K412, K453, and K458. N6-succinyllysine; alternate is present on residues K402 and K412. N6-acetyllysine; alternate is present on residues K412, K453, K458, K522, K527, and K532. N6-succinyllysine; alternate occurs at positions 458, 522, and 527. K527 and K532 each carry N6-glutaryllysine; alternate. At S537 the chain carries Phosphoserine; alternate. S537 carries O-linked (GlcNAc) serine; alternate glycosylation. S540 carries the post-translational modification Phosphoserine. One can recognise an ATP-grasp 1 domain in the interval 551–743 (SDKLNEINEK…LAFIAAKIAL (193 aa)). Residues K553 and K560 each carry the N6-acetyllysine; alternate modification. An N6-glutaryllysine; alternate modification is found at K553. N6-succinyllysine; alternate occurs at positions 553 and 560. The residue at position 569 (S569) is a Phosphoserine. An N6-acetyllysine; alternate mark is found at K575 and K612. K575 and K612 each carry N6-succinyllysine; alternate. Residue K630 is modified to N6-acetyllysine. At K728 the chain carries N6-glutaryllysine. N6-acetyllysine; alternate occurs at positions 751, 757, 772, 793, 811, and 831. K751 and K757 each carry N6-succinyllysine; alternate. N6-glutaryllysine; alternate occurs at positions 757, 772, 793, and 811. The residue at position 793 (K793) is an N6-succinyllysine; alternate. K831 carries the N6-succinyllysine; alternate modification. The residue at position 835 (S835) is a Phosphoserine. Residues K841 and K856 each carry the N6-acetyllysine; alternate modification. K841 and K856 each carry N6-glutaryllysine; alternate. K869 bears the N6-glutaryllysine mark. 3 positions are modified to N6-acetyllysine; alternate: K875, K889, and K892. An N6-glutaryllysine; alternate mark is found at K875, K889, and K892. K875, K889, and K892 each carry N6-succinyllysine; alternate. Phosphoserine is present on residues S896 and S898. At K905 the chain carries N6-glutaryllysine. 3 positions are modified to N6-acetyllysine; alternate: K908, K915, and K919. Residues K908, K915, and K919 each carry the N6-glutaryllysine; alternate modification. 2 positions are modified to N6-succinyllysine; alternate: K915 and K919. K935 is subject to N6-acetyllysine. Position 1036 is a phosphoserine (S1036). K1074 carries the N6-acetyllysine; alternate modification. Residue K1074 is modified to N6-glutaryllysine; alternate. An N6-succinyllysine; alternate modification is found at K1074. Residues S1079, S1090, and S1093 each carry the phosphoserine modification. The ATP-grasp 2 domain maps to 1093 to 1284 (SAVLDELKVA…FIDVATKVMI (192 aa)). K1100 is subject to N6-acetyllysine; alternate. K1100 bears the N6-succinyllysine; alternate mark. Position 1149 is an N6-succinyllysine (K1149). At K1150 the chain carries N6-glutaryllysine. N6-acetyllysine; alternate occurs at positions 1168 and 1183. 2 positions are modified to N6-glutaryllysine; alternate: K1168 and K1183. An N6-succinyllysine; alternate mark is found at K1168 and K1183. The residue at position 1203 (S1203) is a Phosphoserine. Residue K1222 is modified to N6-acetyllysine. K1224 carries the N6-glutaryllysine modification. N6-acetyllysine; alternate is present on residues K1232, K1269, and K1291. K1232, K1269, and K1291 each carry N6-succinyllysine; alternate. Residue S1331 is glycosylated (O-linked (GlcNAc) serine). T1332 carries O-linked (GlcNAc) threonine glycosylation. Positions 1355 to 1500 (FKIPQKGILI…YRQYSAGKAA (146 aa)) constitute an MGS-like domain. Residue K1356 is modified to N6-acetyllysine; alternate. K1356 and K1360 each carry N6-glutaryllysine; alternate. 2 positions are modified to N6-succinyllysine; alternate: K1356 and K1360. N-acetyl-L-glutamate contacts are provided by T1391, T1394, and W1410. S1419 and S1431 each carry phosphoserine. N-acetyl-L-glutamate-binding residues include N1437 and N1440. K1444 carries the N6-acetyllysine; alternate modification. K1444 is modified (N6-succinyllysine; alternate). N1449 lines the N-acetyl-L-glutamate pocket. N6-acetyllysine; alternate occurs at positions 1471, 1479, and 1486. N6-succinyllysine; alternate is present on residues K1471, K1479, and K1486. N6-glutaryllysine; alternate occurs at positions 1479 and 1486.

As to quaternary structure, can form homooligomers (monomers as predominant form and dimers). In terms of processing, undergoes proteolytic cleavage in the C-terminal region corresponding to the loss of approximately 12 AA residues from the C-terminus. Post-translationally, succinylated at Lys-287 and Lys-1291. Desuccinylated at Lys-1291 by SIRT5, leading to activation. Glutarylated. Glutarylation levels increase during fasting. Deglutarylated by SIRT5 at Lys-55, Lys-219, Lys-412, Lys-889, Lys-892, Lys-915, Lys-1360 and Lys-1486, leading to activation. In terms of tissue distribution, primarily in the liver and small intestine.

It is found in the mitochondrion. The protein resides in the nucleus. Its subcellular location is the nucleolus. It localises to the cell membrane. It catalyses the reaction hydrogencarbonate + NH4(+) + 2 ATP = carbamoyl phosphate + 2 ADP + phosphate + 2 H(+). With respect to regulation, requires N-acetyl-L-glutamate (NAG) as an allosteric activator. Activated by glycerol in the absence of NAG, whereas in the presence of NAG it is inhibited by increasing concentrations of glycerol. In terms of biological role, involved in the urea cycle of ureotelic animals where the enzyme plays an important role in removing excess ammonia from the cell. This Homo sapiens (Human) protein is Carbamoyl-phosphate synthase [ammonia], mitochondrial (CPS1).